Here is a 231-residue protein sequence, read N- to C-terminus: Cytidylate kinase (231 aa).

An ATP-binding site is contributed by 12–20 (GPSGAGKGT).

This sequence belongs to the cytidylate kinase family. Type 1 subfamily.

The protein localises to the cytoplasm. It carries out the reaction CMP + ATP = CDP + ADP. It catalyses the reaction dCMP + ATP = dCDP + ADP. The chain is Cytidylate kinase from Shewanella amazonensis (strain ATCC BAA-1098 / SB2B).